The chain runs to 533 residues: Zona pellucida sperm-binding protein 3 receptor (533 aa).

Positions 1-28 (MFPRLQAVSAPALLQITLMAVLLAPVLG) are cleaved as a signal peptide. Sushi domains are found at residues 29–88 (DCGP…FCAK), 89–150 (KRCR…ECVI), 151–215 (VKCD…TCEK), 216–275 (VICR…TCEP), 276–342 (NGCI…GCER), 343–408 (VCCP…ACES), and 409–467 (AVCL…KCEW). Intrachain disulfides connect cysteine 30–cysteine 74, cysteine 60–cysteine 86, cysteine 91–cysteine 132, cysteine 118–cysteine 148, cysteine 153–cysteine 196, cysteine 182–cysteine 213, cysteine 218–cysteine 260, cysteine 246–cysteine 273, cysteine 278–cysteine 328, cysteine 312–cysteine 340, cysteine 345–cysteine 393, cysteine 378–cysteine 406, cysteine 411–cysteine 452, and cysteine 438–cysteine 465. Residues asparagine 68 and asparagine 77 are each glycosylated (N-linked (GlcNAc...) asparagine). Asparagine 185, asparagine 191, and asparagine 200 each carry an N-linked (GlcNAc...) asparagine glycan. Asparagine 433 and asparagine 455 each carry an N-linked (GlcNAc...) asparagine glycan.

In terms of assembly, homooligomer; disulfide-linked. May contain 6-8 monomers per oligomer. The N-terminus may be blocked. In terms of tissue distribution, testis. Not expressed in heart, brain, liver or kidney.

Its subcellular location is the cytoplasmic vesicle. The protein resides in the secretory vesicle. It localises to the acrosome lumen. Its function is as follows. Probably involved in the formation of the dense core and M1 domain of the acrosome. May also regulate the release of certain secretory proteins following the acrosomal reaction. The sequence is that of Zona pellucida sperm-binding protein 3 receptor (ZP3R) from Cavia porcellus (Guinea pig).